The chain runs to 410 residues: Voltage-dependent chloride channel 1, chloroplastic (410 aa).

Residues 1-110 (MYQSMNLSVS…RHLLSSFSSR (110 aa)) are Lumenal, thylakoid-facing. Residues 111–131 (VILSLIPPVFFFTSVAVVIAS) traverse the membrane as a helical segment. Topologically, residues 132 to 147 (YNSAVALDWLPGIFPI) are stromal. The chain crosses the membrane as a helical span at residues 148–168 (LRSSSLPYQLTAPALALLLVF). Residues 169–315 (RTEASYSRYE…PLSYTRLTSR (147 aa)) are Lumenal, thylakoid-facing. The next 2 helical transmembrane spans lie at 316–336 (FLVF…HWIV) and 337–357 (VPAT…GVLI). At 358–410 (EEPFPMLALDELCDLVHSNIQEAVKSEKVIRNRIIAKIKLHEFKHSSNGRHRS) the chain is on the lumenal, thylakoid side.

The protein belongs to the anion channel-forming bestrophin (TC 1.A.46) family. Voltage-dependent chloride channel subfamily. As to expression, mostly expressed in flowers and leaves and, to a lower extent, in stems and roots.

It localises to the plastid. It is found in the chloroplast thylakoid membrane. It catalyses the reaction chloride(in) = chloride(out). With respect to regulation, more active at positive than at negative voltages. Repressed by the general anion channel inhibitors dithiocyanatostilbene-2,20-disulphonic acid (DIDS) and niflumic acid. In terms of biological role, voltage-dependent chloride (Cl) channel critical for proton motive force (PMF) partitioning across the thylakoid membrane by anion influx into the lumen during illumination, thus being required for photoprotection under fluctuating light conditions. Influences thylakoid ultrastructure, including lumen size and organization. During photosynthetic response on transition from dark to low light, involved in a sequential mechanism of adaptation; VCCN1 and CLCe first trigger the activation of photoprotection, which is later down-regulated by KEA3 to a low steady state, while adjusting electron transport. On transition from low to high light, accelerates the activation of photoprotection by building up a pH gradient across the thylakoid membrane. The chain is Voltage-dependent chloride channel 1, chloroplastic from Arabidopsis thaliana (Mouse-ear cress).